Reading from the N-terminus, the 571-residue chain is Plastidial pyruvate kinase 3, chloroplastic (571 aa).

The transit peptide at 1–55 (MAAYGQISSGMTVDPQVLSSSRNIGVSLSPLRRTLIGAGVRSTSISLRQCSLSVR) directs the protein to the chloroplast. Position 129 (Arg-129) interacts with substrate. Positions 131, 133, 164, and 165 each coordinate K(+). Position 131–134 (131–134 (NMSH)) interacts with ATP. Residue Arg-171 coordinates ATP. Lys-314 lines the substrate pocket. Residue Glu-316 coordinates Mg(2+). The substrate site is built by Gly-339, Asp-340, and Thr-372. Asp-340 contacts Mg(2+).

This sequence belongs to the pyruvate kinase family. In terms of assembly, oligomer of alpha and beta subunits. Mg(2+) is required as a cofactor. It depends on K(+) as a cofactor. As to expression, expressed at low levels in roots, leaves, inflorescences, siliques, pollen, seeds and flowers.

The protein resides in the plastid. The protein localises to the chloroplast stroma. It catalyses the reaction pyruvate + ATP = phosphoenolpyruvate + ADP + H(+). Its pathway is carbohydrate degradation; glycolysis; pyruvate from D-glyceraldehyde 3-phosphate: step 5/5. Its function is as follows. Required for plastidial pyruvate kinase activity. The sequence is that of Plastidial pyruvate kinase 3, chloroplastic (PKP3) from Arabidopsis thaliana (Mouse-ear cress).